The sequence spans 586 residues: MLARVTRKMLRHAKCFQRLAIFGSVRALHKDNRTATPQNFSNYESMKQDFKLGIPEYFNFAKDVLDQWTDKEKAGKKPSNPAFWWINRNGEEMRWSFEELGSLSRKFANILSEACSLQRGDRVILILPRVPEWWLANVACLRTGTVLIPGTTQLTQKDILYRLQSSKANCIITNDVLAPAVDAVASKCENLHSKLIVSENSREGWGNLKELMKHASDSHTCVKTKHNEIMAIFFTSGTSGYPKMTAHTHSSFGLGLSVNGRFWLDLTPSDVMWNTSDTGWAKSAWSSVFSPWIQGACVFTHHLPRFEPTSILQTLSKYPITVFCSAPTVYRMLVQNDITSYKFKSLKHCVSAGEPITPDVTEKWRNKTGLDIYEGYGQTETVLICGNFKGMKIKPGSMGKPSPAFDVKIVDVNGNVLPPGQEGDIGIQVLPNRPFGLFTHYVDNPSKTASTLRGNFYITGDRGYMDKDGYFWFVARADDVILSSGYRIGPFEVENALNEHPSVAESAVVSSPDPIRGEVVKAFVVLNPDYKSHDQEQLIKEIQEHVKKTTAPYKYPRKVEFIQELPKTISGKTKRNELRKKEWKTI.

Residues 1–27 (MLARVTRKMLRHAKCFQRLAIFGSVRA) constitute a mitochondrion transit peptide. Lysine 73 and lysine 106 each carry N6-succinyllysine. N6-acetyllysine is present on lysine 157. ATP is bound by residues 235–243 (TSGTSGYPK), 374–379 (EGYGQT), aspartate 461, arginine 476, and lysine 572.

This sequence belongs to the ATP-dependent AMP-binding enzyme family. Mg(2+) is required as a cofactor. Mn(2+) serves as cofactor.

Its subcellular location is the mitochondrion. It is found in the mitochondrion matrix. The enzyme catalyses a medium-chain fatty acid + ATP + CoA = a medium-chain fatty acyl-CoA + AMP + diphosphate. It carries out the reaction propanoate + ATP + CoA = propanoyl-CoA + AMP + diphosphate. It catalyses the reaction butanoate + ATP + CoA = butanoyl-CoA + AMP + diphosphate. The catalysed reaction is 2-methylpropanoate + ATP + CoA = 2-methylpropanoyl-CoA + AMP + diphosphate. The enzyme catalyses 2-methylbutanoate + ATP + CoA = 2-methylbutanoyl-CoA + AMP + diphosphate. It carries out the reaction octanoate + ATP + CoA = octanoyl-CoA + AMP + diphosphate. Functionally, catalyzes the activation of fatty acids by CoA to produce an acyl-CoA, the first step in fatty acid metabolism. Capable of activating medium-chain fatty acids with a preference for isobutyrate among fatty acids with 2-6 carbon atoms. The polypeptide is Acyl-coenzyme A synthetase ACSM3, mitochondrial (ACSM3) (Homo sapiens (Human)).